A 209-amino-acid polypeptide reads, in one-letter code: Chaperone protein TorD (209 aa).

This sequence belongs to the TorD/DmsD family. TorD subfamily.

Its subcellular location is the cytoplasm. In terms of biological role, involved in the biogenesis of TorA. Acts on TorA before the insertion of the molybdenum cofactor and, as a result, probably favors a conformation of the apoenzyme that is competent for acquiring the cofactor. The chain is Chaperone protein TorD from Shewanella baltica (strain OS185).